We begin with the raw amino-acid sequence, 88 residues long: ATP synthase epsilon chain (88 aa).

This sequence belongs to the ATPase epsilon chain family. F-type ATPases have 2 components, CF(1) - the catalytic core - and CF(0) - the membrane proton channel. CF(1) has five subunits: alpha(3), beta(3), gamma(1), delta(1), epsilon(1). CF(0) has three main subunits: a, b and c.

Its subcellular location is the cell inner membrane. Functionally, produces ATP from ADP in the presence of a proton gradient across the membrane. The protein is ATP synthase epsilon chain (atpC) of Chlorobaculum tepidum (strain ATCC 49652 / DSM 12025 / NBRC 103806 / TLS) (Chlorobium tepidum).